The primary structure comprises 215 residues: Pyrrolidone-carboxylate peptidase (215 aa).

Active-site residues include Glu81, Cys144, and His168.

It belongs to the peptidase C15 family. Homotetramer.

Its subcellular location is the cytoplasm. The enzyme catalyses Release of an N-terminal pyroglutamyl group from a polypeptide, the second amino acid generally not being Pro.. Its function is as follows. Removes 5-oxoproline from various penultimate amino acid residues except L-proline. The chain is Pyrrolidone-carboxylate peptidase (pcp) from Bacillus subtilis (strain 168).